The sequence spans 139 residues: Envelope protein A28 homolog (139 aa).

A helical; Signal-anchor for type II membrane protein transmembrane segment spans residues 1 to 21 (MNPSSVFLIVVATVAICLIVI). Topologically, residues 22–139 (QVYYIYENYD…KDCNFLKSVL (118 aa)) are virion surface.

It belongs to the poxviridae A28 protein family. In terms of processing, contains two intramolecular disulfide bonds. They are created by the viral disulfide bond formation pathway, a poxvirus-specific pathway that operates on the cytoplasmic side of the MV membranes.

The protein resides in the virion membrane. Functionally, envelope protein required for virus entry into host cell and for cell-cell fusion (syncytium formation). In Homo sapiens (Human), this protein is Envelope protein A28 homolog.